The chain runs to 119 residues: Large ribosomal subunit protein uL22 (119 aa).

The protein belongs to the universal ribosomal protein uL22 family. As to quaternary structure, part of the 50S ribosomal subunit.

This protein binds specifically to 23S rRNA; its binding is stimulated by other ribosomal proteins, e.g. L4, L17, and L20. It is important during the early stages of 50S assembly. It makes multiple contacts with different domains of the 23S rRNA in the assembled 50S subunit and ribosome. In terms of biological role, the globular domain of the protein is located near the polypeptide exit tunnel on the outside of the subunit, while an extended beta-hairpin is found that lines the wall of the exit tunnel in the center of the 70S ribosome. This chain is Large ribosomal subunit protein uL22, found in Tropheryma whipplei (strain TW08/27) (Whipple's bacillus).